The following is a 196-amino-acid chain: Phosphoheptose isomerase (196 aa).

In terms of domain architecture, SIS spans 34–196; the sequence is MVQCLLGGKK…DRTLFPQDEA (163 aa). 49–51 lines the substrate pocket; that stretch reads NGG. Zn(2+)-binding residues include His58 and Glu62. Substrate is bound by residues Glu62, 91-92, 117-119, Ser122, and Gln172; these read ND and STS. The Zn(2+) site is built by Gln172 and His180.

Belongs to the SIS family. GmhA subfamily. Homotetramer. Requires Zn(2+) as cofactor.

The protein localises to the cytoplasm. It catalyses the reaction 2 D-sedoheptulose 7-phosphate = D-glycero-alpha-D-manno-heptose 7-phosphate + D-glycero-beta-D-manno-heptose 7-phosphate. The protein operates within carbohydrate biosynthesis; D-glycero-D-manno-heptose 7-phosphate biosynthesis; D-glycero-alpha-D-manno-heptose 7-phosphate and D-glycero-beta-D-manno-heptose 7-phosphate from sedoheptulose 7-phosphate: step 1/1. Functionally, catalyzes the isomerization of sedoheptulose 7-phosphate in D-glycero-D-manno-heptose 7-phosphate. The chain is Phosphoheptose isomerase from Shewanella denitrificans (strain OS217 / ATCC BAA-1090 / DSM 15013).